A 62-amino-acid polypeptide reads, in one-letter code: Small ribosomal subunit protein uS14 (62 aa).

The Zn(2+) site is built by cysteine 25, cysteine 28, cysteine 41, and cysteine 44.

Belongs to the universal ribosomal protein uS14 family. Zinc-binding uS14 subfamily. Part of the 30S ribosomal subunit. Contacts proteins S3 and S10. The cofactor is Zn(2+).

Binds 16S rRNA, required for the assembly of 30S particles and may also be responsible for determining the conformation of the 16S rRNA at the A site. The sequence is that of Small ribosomal subunit protein uS14 from Aquifex aeolicus (strain VF5).